We begin with the raw amino-acid sequence, 461 residues long: Cysteine--tRNA ligase (461 aa).

A Zn(2+)-binding site is contributed by Cys-28. Residues 30 to 40 carry the 'HIGH' region motif; the sequence is ITVYDLCHIGH. Zn(2+) is bound by residues Cys-209, His-234, and Glu-238. A 'KMSKS' region motif is present at residues 266 to 270; the sequence is KMSKS. Lys-269 contacts ATP.

The protein belongs to the class-I aminoacyl-tRNA synthetase family. In terms of assembly, monomer. The cofactor is Zn(2+).

Its subcellular location is the cytoplasm. It carries out the reaction tRNA(Cys) + L-cysteine + ATP = L-cysteinyl-tRNA(Cys) + AMP + diphosphate. The sequence is that of Cysteine--tRNA ligase from Escherichia coli O157:H7.